Consider the following 276-residue polypeptide: MSSFEGKVAVITGAGSGIGRALALNLSEKRAKLALSDVDTDGLAKTVRLAQALGAQVKSDRLDVAEREAVLAHADAVVAHFGTVHQVYNNAGIAYNGNVDKSEFKDIERIIDVDFWGVVNGTKAFLPHVIASGDGHIVNISSLFGLIAVPGQSAYNAAKFAVRGFTEALRQEMLVARHPVKVTCVHPGGIKTAVARNATVADGEDQQTFAEFFDRRLALHSPEMAAKTIVNGVAKGQARVVVGLEAKAVDVLARIMGSSYQRLVAAGVAKFFPWAK.

Ser-142 contributes to the substrate binding site. Tyr-155 functions as the Proton acceptor in the catalytic mechanism.

It belongs to the short-chain dehydrogenases/reductases (SDR) family.

Its function is as follows. Required for maintaining the appropriate mycolic acid composition and permeability of the envelope on its exposure to acidic pH. This is Putative oxidoreductase SadH (sadH) from Mycobacterium tuberculosis (strain CDC 1551 / Oshkosh).